A 189-amino-acid chain; its full sequence is UPF0301 protein CTA_0231 (189 aa).

The protein belongs to the UPF0301 (AlgH) family.

This is UPF0301 protein CTA_0231 from Chlamydia trachomatis serovar A (strain ATCC VR-571B / DSM 19440 / HAR-13).